The following is a 65-amino-acid chain: Large ribosomal subunit protein uL29 (65 aa).

The protein belongs to the universal ribosomal protein uL29 family.

This chain is Large ribosomal subunit protein uL29, found in Desulforapulum autotrophicum (strain ATCC 43914 / DSM 3382 / VKM B-1955 / HRM2) (Desulfobacterium autotrophicum).